Here is a 282-residue protein sequence, read N- to C-terminus: tRNA uridine(34) hydroxylase (282 aa).

The region spanning 128–222 is the Rhodanese domain; sequence DGREVVMLDT…YFEEVGADHY (95 aa). Residue cysteine 182 is the Cysteine persulfide intermediate of the active site.

The protein belongs to the TrhO family.

It carries out the reaction uridine(34) in tRNA + AH2 + O2 = 5-hydroxyuridine(34) in tRNA + A + H2O. Functionally, catalyzes oxygen-dependent 5-hydroxyuridine (ho5U) modification at position 34 in tRNAs. In Ralstonia nicotianae (strain ATCC BAA-1114 / GMI1000) (Ralstonia solanacearum), this protein is tRNA uridine(34) hydroxylase.